The primary structure comprises 123 residues: Putative acidic leucine-rich nuclear phosphoprotein 32 family member C (123 aa).

LRR repeat units follow at residues 43–64 (ELEFLSTINVGLTFISNLPKLN), 65–87 (KLKKLELSENRISGDLEVLAEKC), 89–110 (NLKHLNLSGNKIKDLSTIELLK), and 114–123 (NLKSLDLFNC).

The protein belongs to the ANP32 family.

This chain is Putative acidic leucine-rich nuclear phosphoprotein 32 family member C (Anp32c), found in Mus musculus (Mouse).